The sequence spans 192 residues: Inosine triphosphate pyrophosphatase (192 aa).

8–13 is an ITP binding site; it reads TTNLKK. Mg(2+) is bound at residue Glu34. Residues Lys46, 64 to 65, Lys81, 141 to 144, Lys164, and 169 to 170 each bind ITP; these read DT, EGFD, and HR.

This sequence belongs to the HAM1 NTPase family. Homodimer. The cofactor is Mg(2+). Mn(2+) serves as cofactor.

Its subcellular location is the cytoplasm. It localises to the nucleus. It catalyses the reaction ITP + H2O = IMP + diphosphate + H(+). It carries out the reaction dITP + H2O = dIMP + diphosphate + H(+). The enzyme catalyses XTP + H2O = XMP + diphosphate + H(+). Its function is as follows. Pyrophosphatase that hydrolyzes non-canonical purine nucleotides such as inosine triphosphate (ITP), deoxyinosine triphosphate (dITP) or xanthosine 5'-triphosphate (XTP) to their respective monophosphate derivatives. The enzyme does not distinguish between the deoxy- and ribose forms. Probably excludes non-canonical purines from RNA and DNA precursor pools, thus preventing their incorporation into RNA and DNA and avoiding chromosomal lesions. The polypeptide is Inosine triphosphate pyrophosphatase (Encephalitozoon cuniculi (strain GB-M1) (Microsporidian parasite)).